Reading from the N-terminus, the 156-residue chain is Histone acetyltransferase HPA2 (156 aa).

The 148-residue stretch at 9-156 (ITVRFVTEND…PKILYKRKGY (148 aa)) folds into the N-acetyltransferase domain. Position 93-106 (93-106 (LYVDENSRVKGAGG)) interacts with acetyl-CoA.

The protein belongs to the acetyltransferase family. GNAT subfamily. Forms homodimers in the absence, and homotetramers in the presence of acetyl-CoA. Post-translationally, autoacetylates in an intermolecular reaction.

The catalysed reaction is L-lysyl-[protein] + acetyl-CoA = N(6)-acetyl-L-lysyl-[protein] + CoA + H(+). Functionally, N-acetyltransferase that acetylates histone H3 at 'Lys-14' and histone H4 at 'Lys-5' and 'Lys-12'. Also acetylates polyamines like putrescine, spermidine and spermine, and certain other small basic proteins like nuclear HMG proteins. The polypeptide is Histone acetyltransferase HPA2 (Saccharomyces cerevisiae (strain ATCC 204508 / S288c) (Baker's yeast)).